The following is a 189-amino-acid chain: T-cell surface glycoprotein CD3 epsilon chain (189 aa).

Residues 1 to 21 (MRWNTFWGILCLSLLAVGTCQ) form the signal peptide. The Ig-like domain maps to 23–99 (DAENIEYKVS…KNTYLYLKAR (77 aa)). Over 23–108 (DAENIEYKVS…RVCEYCVEVD (86 aa)) the chain is Extracellular. The cysteines at positions 42 and 83 are disulfide-linked. The chain crosses the membrane as a helical span at residues 109-134 (LTAVAIIIIVDICITLGLLMVIYYWS). The Cytoplasmic portion of the chain corresponds to 135–189 (KNRKAKAKPVTRGTGAGSRPRGQNKERPPPVPNPDYEPIRKGQRDLYSGLNQRAV). The interval 143-189 (PVTRGTGAGSRPRGQNKERPPPVPNPDYEPIRKGQRDLYSGLNQRAV) is disordered. An NUMB-binding region region spans residues 157-174 (QNKERPPPVPNPDYEPIR). Residues 160 to 187 (ERPPPVPNPDYEPIRKGQRDLYSGLNQR) form the ITAM domain. The interval 161–168 (RPPPVPNP) is proline-rich sequence. A phosphotyrosine mark is found at Tyr-170 and Tyr-181.

In terms of assembly, the TCR-CD3 complex is composed of a CD3D/CD3E and a CD3G/CD3E heterodimers that preferentially associate with TCRalpha and TCRbeta, respectively, to form TCRalpha/CD3E/CD3G and TCRbeta/CD3G/CD3E trimers. In turn, the hexamer interacts with CD3Z homodimer to form the TCR-CD3 complex. Alternatively, TCRalpha and TCRbeta can be replaced by TCRgamma and TCRdelta. Interacts with CD6. Interacts (via Proline-rich sequence) with NCK1; the interaction is ligand dependent but independent of tyrosine kinase activation. In terms of processing, phosphorylated on Tyr residues after T-cell receptor triggering by LCK in association with CD4/CD8.

Its subcellular location is the cell membrane. In terms of biological role, part of the TCR-CD3 complex present on T-lymphocyte cell surface that plays an essential role in adaptive immune response. When antigen presenting cells (APCs) activate T-cell receptor (TCR), TCR-mediated signals are transmitted across the cell membrane by the CD3 chains CD3D, CD3E, CD3G and CD3Z. All CD3 chains contain immunoreceptor tyrosine-based activation motifs (ITAMs) in their cytoplasmic domain. Upon TCR engagement, these motifs become phosphorylated by Src family protein tyrosine kinases LCK and FYN, resulting in the activation of downstream signaling pathways. In addition of this role of signal transduction in T-cell activation, CD3E plays an essential role in correct T-cell development. Also participates in internalization and cell surface down-regulation of TCR-CD3 complexes via endocytosis sequences present in CD3E cytosolic region. In addition to its role as a TCR coreceptor, it serves as a receptor for ITPRIPL1. Ligand recognition inhibits T-cell activation by promoting interaction with NCK1, which prevents CD3E-ZAP70 interaction and blocks the ERK-NFkB signaling cascade and calcium influx. The protein is T-cell surface glycoprotein CD3 epsilon chain (Cd3e) of Mus musculus (Mouse).